The primary structure comprises 138 residues: uncharacterized protein (138 aa).

A MsrB domain is found at 9–133 (EDEWKKELGP…NSASLEFHNE (125 aa)). Residues cysteine 49, cysteine 52, cysteine 97, and cysteine 100 each contribute to the Zn(2+) site. Catalysis depends on cysteine 122, which acts as the Nucleophile.

It belongs to the MsrB Met sulfoxide reductase family. It depends on Zn(2+) as a cofactor.

The protein localises to the cytoplasm. It localises to the nucleus. This is an uncharacterized protein from Schizosaccharomyces pombe (strain 972 / ATCC 24843) (Fission yeast).